The following is a 261-amino-acid chain: uncharacterized protein (261 aa).

The N-terminal stretch at 1-22 (MIHSKKLTLGICLVLLIILIGG) is a signal peptide. A lipid anchor (N-palmitoyl cysteine) is attached at cysteine 23. The S-diacylglycerol cysteine moiety is linked to residue cysteine 23.

The protein belongs to the staphylococcal tandem lipoprotein family.

The protein localises to the cell membrane. This is an uncharacterized protein from Staphylococcus aureus (strain USA300).